The chain runs to 464 residues: Protein FAM90A18 (464 aa).

3 disordered regions span residues 1-42 (MMAR…DPRL), 70-387 (PATL…ASHD), and 415-437 (HSPEKPGAFLAQSPHVSEKSEAP). Basic and acidic residues-rich tracts occupy residues 74–89 (GKKEGKENLKPWKPRV) and 97–114 (NKDKGEKEERPRQQDPQR). The span at 180-197 (LASLSPLRKASLSSSSSL) shows a compositional bias: low complexity.

Belongs to the FAM90 family.

In Homo sapiens (Human), this protein is Protein FAM90A18.